Reading from the N-terminus, the 162-residue chain is COP9 signalosome complex subunit 9 (162 aa).

In terms of domain architecture, PCI spans 6-118 (ETIKSLEDPY…SVSKSMKFSR (113 aa)).

As to quaternary structure, component of a COP9 signalosome-like (CSN) complex, composed of at least RRI1/CSN5, CSN9, RRI2/CSN10, PCI8/CSN11, CSN12 and CSI1. In the complex, it probably interacts directly with CSN12 and CSI1. Also interacts with RPN5.

It localises to the cytoplasm. Its subcellular location is the nucleus. Its function is as follows. Component of the COP9 signalosome (CSN) complex that acts as a regulator of the ubiquitin (Ubl) conjugation pathway by mediating the deneddylation of the cullin subunit of SCF-type E3 ubiquitin-protein ligase complexes. The CSN complex is involved in the regulation of the mating pheromone response. The chain is COP9 signalosome complex subunit 9 (CSN9) from Saccharomyces cerevisiae (strain ATCC 204508 / S288c) (Baker's yeast).